The following is a 33-amino-acid chain: Gaegurin-1 (33 aa).

Residues cysteine 27 and cysteine 33 are joined by a disulfide bond.

It belongs to the frog skin active peptide (FSAP) family. Brevinin subfamily. Monomer. In terms of tissue distribution, expressed by the skin glands.

The protein resides in the secreted. Has a non-hemolytic activity. Has a broad spectrum of activity against both Gram-positive and Gram-negative bacteria, fungi and protozoa. The polypeptide is Gaegurin-1 (GGN1) (Glandirana rugosa (Japanese wrinkled frog)).